The primary structure comprises 210 residues: Thymidylate kinase (210 aa).

10–17 (GPEGAGKS) lines the ATP pocket.

Belongs to the thymidylate kinase family.

The catalysed reaction is dTMP + ATP = dTDP + ADP. Its function is as follows. Phosphorylation of dTMP to form dTDP in both de novo and salvage pathways of dTTP synthesis. The sequence is that of Thymidylate kinase from Pseudomonas entomophila (strain L48).